A 363-amino-acid polypeptide reads, in one-letter code: Mannose-1-phosphate guanyltransferase (363 aa).

The protein belongs to the transferase hexapeptide repeat family.

The protein localises to the cytoplasm. The enzyme catalyses alpha-D-mannose 1-phosphate + GTP + H(+) = GDP-alpha-D-mannose + diphosphate. It functions in the pathway nucleotide-sugar biosynthesis; GDP-alpha-D-mannose biosynthesis; GDP-alpha-D-mannose from alpha-D-mannose 1-phosphate (GTP route): step 1/1. Involved in cell wall synthesis where it is required for glycosylation. Involved in cell cycle progression through cell-size checkpoint. Required for the correct assembly of the septum. The protein is Mannose-1-phosphate guanyltransferase (mpg1) of Schizosaccharomyces pombe (strain 972 / ATCC 24843) (Fission yeast).